The sequence spans 276 residues: ATP synthase subunit a (276 aa).

6 consecutive transmembrane segments (helical) span residues 47 to 67 (WHIDSLLFSVGLGVLFLWLFY), 107 to 127 (IAPLGLTIFVWVFLMNLMDLI), 152 to 172 (DLNVTLGLALSVFVLIVFYSI), 188 to 208 (PFNHWALIPINFVLETVTLIA), 226 to 246 (LIFILIALMPWWAQFALSVPW), and 247 to 267 (AIFHILVIVLQAFIFMMLTIV).

It belongs to the ATPase A chain family. As to quaternary structure, F-type ATPases have 2 components, CF(1) - the catalytic core - and CF(0) - the membrane proton channel. CF(1) has five subunits: alpha(3), beta(3), gamma(1), delta(1), epsilon(1). CF(0) has three main subunits: a(1), b(2) and c(9-12). The alpha and beta chains form an alternating ring which encloses part of the gamma chain. CF(1) is attached to CF(0) by a central stalk formed by the gamma and epsilon chains, while a peripheral stalk is formed by the delta and b chains.

It is found in the cell inner membrane. Functionally, key component of the proton channel; it plays a direct role in the translocation of protons across the membrane. In Shewanella halifaxensis (strain HAW-EB4), this protein is ATP synthase subunit a.